Consider the following 95-residue polypeptide: Co-chaperonin GroES (95 aa).

The protein belongs to the GroES chaperonin family. As to quaternary structure, heptamer of 7 subunits arranged in a ring. Interacts with the chaperonin GroEL.

The protein localises to the cytoplasm. In terms of biological role, together with the chaperonin GroEL, plays an essential role in assisting protein folding. The GroEL-GroES system forms a nano-cage that allows encapsulation of the non-native substrate proteins and provides a physical environment optimized to promote and accelerate protein folding. GroES binds to the apical surface of the GroEL ring, thereby capping the opening of the GroEL channel. The protein is Co-chaperonin GroES of Staphylococcus haemolyticus (strain JCSC1435).